The following is a 272-amino-acid chain: MAQNKNQTLPISIKDLLEAGAHFGHQTSRWNPKMKRFIFEERNGLYIIDLAKTLQQIRNAVDIVRDVVAKHKSILFVGTKKQAKAVLRELSEQCGEFYVCERWLGGMLTNLSTIRQSVKKLERIEKRISTGGEGLTKKEISLLTKDQIKLEKNLSGVRSMRKPPGLVIVVDPSKEHLAVAEANKLGIPVMGLVDTNCDPDPIEHVIACNDDALKSIKLILETLAKAIIDKKNDIKVYASKEEQTEEAEEETLSSKYREQDFQEAKSGARGEK.

Positions 238–272 (ASKEEQTEEAEEETLSSKYREQDFQEAKSGARGEK) are disordered. Positions 255–272 (KYREQDFQEAKSGARGEK) are enriched in basic and acidic residues.

It belongs to the universal ribosomal protein uS2 family.

In Protochlamydia amoebophila (strain UWE25), this protein is Small ribosomal subunit protein uS2.